The primary structure comprises 108 residues: Large ribosomal subunit protein uL24 (108 aa).

This sequence belongs to the universal ribosomal protein uL24 family. In terms of assembly, part of the 50S ribosomal subunit.

Functionally, one of two assembly initiator proteins, it binds directly to the 5'-end of the 23S rRNA, where it nucleates assembly of the 50S subunit. In terms of biological role, one of the proteins that surrounds the polypeptide exit tunnel on the outside of the subunit. This Desulfosudis oleivorans (strain DSM 6200 / JCM 39069 / Hxd3) (Desulfococcus oleovorans) protein is Large ribosomal subunit protein uL24.